The chain runs to 167 residues: Leptin (167 aa).

An N-terminal signal peptide occupies residues 1–21; the sequence is MCWRPLCRFLWLWSYLSYVQA. Cys117 and Cys167 are joined by a disulfide.

It belongs to the leptin family.

The protein localises to the secreted. Its function is as follows. Key player in the regulation of energy balance and body weight control. Once released into the circulation, has central and peripheral effects by binding LEPR, found in many tissues, which results in the activation of several major signaling pathways. In the hypothalamus, acts as an appetite-regulating factor that induces a decrease in food intake and an increase in energy consumption by inducing anorexinogenic factors and suppressing orexigenic neuropeptides, also regulates bone mass and secretion of hypothalamo-pituitary-adrenal hormones. In the periphery, increases basal metabolism, influences reproductive function, regulates pancreatic beta-cell function and insulin secretion, is pro-angiogenic for endothelial cell and affects innate and adaptive immunity. In the arcuate nucleus of the hypothalamus, activates by depolarization POMC neurons inducing FOS and SOCS3 expression to release anorexigenic peptides and inhibits by hyperpolarization NPY neurons inducing SOCS3 with a consequent reduction on release of orexigenic peptides. In addition to its known satiety inducing effect, has a modulatory role in nutrient absorption. In the intestine, reduces glucose absorption by enterocytes by activating PKC and leading to a sequential activation of p38, PI3K and ERK signaling pathways which exerts an inhibitory effect on glucose absorption. Acts as a growth factor on certain tissues, through the activation of different signaling pathways increases expression of genes involved in cell cycle regulation such as CCND1, via JAK2-STAT3 pathway, or VEGFA, via MAPK1/3 and PI3K-AKT1 pathways. May also play an apoptotic role via JAK2-STAT3 pathway and up-regulation of BIRC5 expression. Pro-angiogenic, has mitogenic activity on vascular endothelial cells and plays a role in matrix remodeling by regulating the expression of matrix metalloproteinases (MMPs) and tissue inhibitors of metalloproteinases (TIMPs). In innate immunity, modulates the activity and function of neutrophils by increasing chemotaxis and the secretion of oxygen radicals. Increases phagocytosis by macrophages and enhances secretion of pro-inflammatory mediators. Increases cytotoxic ability of NK cells. Plays a pro-inflammatory role, in synergy with IL1B, by inducing NOS2 which promotes the production of IL6, IL8 and Prostaglandin E2, through a signaling pathway that involves JAK2, PI3K, MAP2K1/MEK1 and MAPK14/p38. In adaptive immunity, promotes the switch of memory T-cells towards T helper-1 cell immune responses. Increases CD4(+)CD25(-) T-cell proliferation and reduces autophagy during TCR (T-cell receptor) stimulation, through MTOR signaling pathway activation and BCL2 up-regulation. The protein is Leptin (Lep) of Rattus norvegicus (Rat).